The sequence spans 260 residues: Ribosome maturation factor RimP (260 aa).

Composition is skewed to basic and acidic residues over residues 189–199 (RRGRDAEREQL) and 215–227 (AREM…PRKE). The tract at residues 189 to 260 (RRGRDAEREQ…QTTSDPHQGE (72 aa)) is disordered. A compositionally biased stretch (basic residues) spans 228–242 (KTAKKPLPKNTKAHR).

The protein belongs to the RimP family.

It localises to the cytoplasm. Functionally, required for maturation of 30S ribosomal subunits. This is Ribosome maturation factor RimP from Afipia carboxidovorans (strain ATCC 49405 / DSM 1227 / KCTC 32145 / OM5) (Oligotropha carboxidovorans).